Here is a 188-residue protein sequence, read N- to C-terminus: Pyridoxal 5'-phosphate synthase subunit PdxT (188 aa).

Residue 46 to 48 (GES) participates in L-glutamine binding. C78 (nucleophile) is an active-site residue. Residues R105 and 134-135 (IR) each bind L-glutamine. Residues H170 and E172 each act as charge relay system in the active site.

It belongs to the glutaminase PdxT/SNO family. In the presence of PdxS, forms a dodecamer of heterodimers. Only shows activity in the heterodimer.

The catalysed reaction is aldehydo-D-ribose 5-phosphate + D-glyceraldehyde 3-phosphate + L-glutamine = pyridoxal 5'-phosphate + L-glutamate + phosphate + 3 H2O + H(+). It carries out the reaction L-glutamine + H2O = L-glutamate + NH4(+). It participates in cofactor biosynthesis; pyridoxal 5'-phosphate biosynthesis. Its function is as follows. Catalyzes the hydrolysis of glutamine to glutamate and ammonia as part of the biosynthesis of pyridoxal 5'-phosphate. The resulting ammonia molecule is channeled to the active site of PdxS. The polypeptide is Pyridoxal 5'-phosphate synthase subunit PdxT (Thermotoga maritima (strain ATCC 43589 / DSM 3109 / JCM 10099 / NBRC 100826 / MSB8)).